The primary structure comprises 128 residues: Large ribosomal subunit protein bL20c (128 aa).

It belongs to the bacterial ribosomal protein bL20 family.

The protein resides in the plastid. Its subcellular location is the chloroplast. Binds directly to 23S ribosomal RNA and is necessary for the in vitro assembly process of the 50S ribosomal subunit. It is not involved in the protein synthesizing functions of that subunit. The polypeptide is Large ribosomal subunit protein bL20c (Daucus carota (Wild carrot)).